Here is a 657-residue protein sequence, read N- to C-terminus: MTQLAIGKPAPLGAHYDGQGVNFTLFSAHAERVELCVFDANGQEHRYDLPGHSGDIWHGYLPDARPGLRYGYRVHGPWQPAEGHRFNPAKLLIDPCARQIDGEFKDNPLLHAGHNEPDYRDNAAIAPKCVVVVDHYDWEDDAPPRTPWGSTIIYEAHVKGLTYLHPEIPVEIRGTYKALGHPVMINYLKQLGITALELLPVAQFASEPRLQRMGLSNYWGYNPVAMFALHPAYACSPETALHEFRDAIKALHKAGIEVILDIVLNHSAELDLDGPLFSLRGIDNRSYYWIREDGDYHNWTGCGNTLNLSHPAVVDYASACLRYWVETCHVDGFRFDLAAVMGRTPEFRQDAPLFTAIQNCPVLSQVKLIAEPWDIAPGGYQVGNFPPLFAEWNDHFRDAARRFWLHYDLPLGAFAGRFAASSDVFKRNGRLPSAAINLVTAHDGFTLRDCVCFNHKHNEANGEENRDGTNNNYSNNHGKEGVGGTLDLVERRRDSIHALLTTLLLSQGTPMLLAGDEHGHSQHGNNNAYCQDNQLTWLDWSQASSGLTAFTAALIHLRKRIPALVENRWWEEGDGNVRWLNRYAQPLSTDEWQNGPKQLQILLSDRFLIAINATLEVTEIVLPAGEWHAIPPFAGEDNPVITAVWQGPAHGLCVFQR.

The active-site Nucleophile is Asp-336. Glu-371 functions as the Proton donor in the catalytic mechanism. Positions Ala-460–Gly-481 are disordered.

It belongs to the glycosyl hydrolase 13 family.

The catalysed reaction is Hydrolysis of (1-&gt;6)-alpha-D-glucosidic linkages to branches with degrees of polymerization of three or four glucose residues in limit dextrin.. It participates in glycan degradation; glycogen degradation. Its function is as follows. Removes maltotriose and maltotetraose chains that are attached by 1,6-alpha-linkage to the limit dextrin main chain, generating a debranched limit dextrin. This is Glycogen debranching enzyme from Escherichia coli O157:H7.